We begin with the raw amino-acid sequence, 155 residues long: 6,7-dimethyl-8-ribityllumazine synthase (155 aa).

5-amino-6-(D-ribitylamino)uracil contacts are provided by residues W22, 56–58 (SFE), and 80–82 (AVI). 85-86 (AT) is a binding site for (2S)-2-hydroxy-3-oxobutyl phosphate. H88 serves as the catalytic Proton donor. F113 provides a ligand contact to 5-amino-6-(D-ribitylamino)uracil. (2S)-2-hydroxy-3-oxobutyl phosphate is bound at residue R127.

This sequence belongs to the DMRL synthase family.

The enzyme catalyses (2S)-2-hydroxy-3-oxobutyl phosphate + 5-amino-6-(D-ribitylamino)uracil = 6,7-dimethyl-8-(1-D-ribityl)lumazine + phosphate + 2 H2O + H(+). It functions in the pathway cofactor biosynthesis; riboflavin biosynthesis; riboflavin from 2-hydroxy-3-oxobutyl phosphate and 5-amino-6-(D-ribitylamino)uracil: step 1/2. Functionally, catalyzes the formation of 6,7-dimethyl-8-ribityllumazine by condensation of 5-amino-6-(D-ribitylamino)uracil with 3,4-dihydroxy-2-butanone 4-phosphate. This is the penultimate step in the biosynthesis of riboflavin. This Chloroflexus aurantiacus (strain ATCC 29364 / DSM 637 / Y-400-fl) protein is 6,7-dimethyl-8-ribityllumazine synthase.